A 283-amino-acid polypeptide reads, in one-letter code: MTVQTSKNPQVDIAEDNAFFPSEYSLSQYTSPVSDLDGVDYPKPYRGKHKILVIAADERYLPTDNGKLFSTGNHPIETLLPLYHLHAAGFEFEVATISGLMTKFEYWAMPQKDEKVMPFFEQHKSLFRNPKKLADVVASLNADSEYAAIFVPGGHGALIGLPESQDVAAALQWAIKNDRFVISLCHGPAAFLALRHGDNPLNGYSICAFPDAADKQTPEIGYMPGHLTWYFGEELKKMGMNIINDDITGRVHKDRKLLTGDSPFAANALGKLAAQEMLAAYAG.

Zn(2+) contacts are provided by H86, E91, and H123. C185 serves as the catalytic Nucleophile.

The protein belongs to the peptidase C56 family. HchA subfamily. In terms of assembly, homodimer.

It localises to the cytoplasm. The enzyme catalyses N(omega)-(1-hydroxy-2-oxopropyl)-L-arginyl-[protein] + H2O = lactate + L-arginyl-[protein] + H(+). It carries out the reaction N(6)-(1-hydroxy-2-oxopropyl)-L-lysyl-[protein] + H2O = lactate + L-lysyl-[protein] + H(+). The catalysed reaction is S-(1-hydroxy-2-oxopropyl)-L-cysteinyl-[protein] + H2O = lactate + L-cysteinyl-[protein] + H(+). It catalyses the reaction N(omega)-(1-hydroxy-2-oxoethyl)-L-arginyl-[protein] + H2O = L-arginyl-[protein] + glycolate + H(+). The enzyme catalyses N(6)-(1-hydroxy-2-oxoethyl)-L-lysyl-[protein] + H2O = glycolate + L-lysyl-[protein] + H(+). It carries out the reaction S-(1-hydroxy-2-oxoethyl)-L-cysteinyl-[protein] + H2O = glycolate + L-cysteinyl-[protein] + H(+). The catalysed reaction is N(2)-(1-hydroxy-2-oxopropyl)-dGTP + H2O = lactate + dGTP + H(+). It catalyses the reaction N(2)-(1-hydroxy-2-oxopropyl)-GTP + H2O = lactate + GTP + H(+). The enzyme catalyses N(2)-(1-hydroxy-2-oxopropyl)-GDP + H2O = lactate + GDP + H(+). It carries out the reaction N(2)-(1-hydroxy-2-oxopropyl)-GMP + H2O = lactate + GMP + H(+). The catalysed reaction is N(2)-(1-hydroxy-2-oxoethyl)-dGTP + H2O = dGTP + glycolate + H(+). It catalyses the reaction N(2)-(1-hydroxy-2-oxoethyl)-GTP + H2O = glycolate + GTP + H(+). The enzyme catalyses N(2)-(1-hydroxy-2-oxoethyl)-GDP + H2O = glycolate + GDP + H(+). It carries out the reaction N(2)-(1-hydroxy-2-oxoethyl)-GMP + H2O = glycolate + GMP + H(+). The catalysed reaction is an N(2)-(1-hydroxy-2-oxopropyl)-guanosine in RNA + H2O = a guanosine in RNA + lactate + H(+). It catalyses the reaction an N(2)-(1-hydroxy-2-oxopropyl)-2'-deoxyguanosine in DNA + H2O = a 2'-deoxyguanosine in DNA + lactate + H(+). The enzyme catalyses an N(2)-(1-hydroxy-2-oxoethyl)-guanosine in RNA + H2O = a guanosine in RNA + glycolate + H(+). It carries out the reaction an N(2)-(1-hydroxy-2-oxoethyl)-2'-deoxyguanosine in DNA + H2O = a 2'-deoxyguanosine in DNA + glycolate + H(+). In terms of biological role, protein and nucleotide deglycase that catalyzes the deglycation of the Maillard adducts formed between amino groups of proteins or nucleotides and reactive carbonyl groups of glyoxals. Thus, functions as a protein deglycase that repairs methylglyoxal- and glyoxal-glycated proteins, and releases repaired proteins and lactate or glycolate, respectively. Deglycates cysteine, arginine and lysine residues in proteins, and thus reactivates these proteins by reversing glycation by glyoxals. Acts on early glycation intermediates (hemithioacetals and aminocarbinols), preventing the formation of Schiff bases and advanced glycation endproducts (AGE). Also functions as a nucleotide deglycase able to repair glycated guanine in the free nucleotide pool (GTP, GDP, GMP, dGTP) and in DNA and RNA. Is thus involved in a major nucleotide repair system named guanine glycation repair (GG repair), dedicated to reversing methylglyoxal and glyoxal damage via nucleotide sanitization and direct nucleic acid repair. Plays an important role in protecting cells from carbonyl stress. This chain is Protein/nucleic acid deglycase HchA, found in Escherichia coli O157:H7.